The chain runs to 465 residues: Fumarate hydratase class II (465 aa).

Residues 99–101 (SGT), 130–133 (HPND), 140–142 (STN), and T188 contribute to the substrate site. H189 (proton donor/acceptor) is an active-site residue. The active site involves S319. Residues S320 and 325–327 (KVN) each bind substrate.

It belongs to the class-II fumarase/aspartase family. Fumarase subfamily. In terms of assembly, homotetramer.

The protein localises to the cytoplasm. The catalysed reaction is (S)-malate = fumarate + H2O. It functions in the pathway carbohydrate metabolism; tricarboxylic acid cycle; (S)-malate from fumarate: step 1/1. Its function is as follows. Involved in the TCA cycle. Catalyzes the stereospecific interconversion of fumarate to L-malate. The polypeptide is Fumarate hydratase class II (Prochlorococcus marinus (strain SARG / CCMP1375 / SS120)).